Consider the following 393-residue polypeptide: Major outer membrane porin, serovar D (393 aa).

An N-terminal signal peptide occupies residues 1–22 (MKKLLKSVLVFAALSSASSLQA).

The protein belongs to the chlamydial porin (CP) (TC 1.B.2) family. In terms of assembly, part of a disulfide cross-linked outer membrane complex (COMC) composed of the major outer membrane porin (MOMP), the small cysteine-rich protein (OmcA) and the large cysteine-rich periplasmic protein (OmcB).

The protein resides in the cell outer membrane. Functionally, in elementary bodies (EBs, the infectious stage, which is able to survive outside the host cell) provides the structural integrity of the outer envelope through disulfide cross-links with the small cysteine-rich protein and the large cysteine-rich periplasmic protein. It has been described in publications as the Sarkosyl-insoluble COMC (Chlamydia outer membrane complex), and serves as the functional equivalent of peptidoglycan. Its function is as follows. Permits diffusion of specific solutes through the outer membrane. The polypeptide is Major outer membrane porin, serovar D (ompA) (Chlamydia trachomatis serovar D (strain ATCC VR-885 / DSM 19411 / UW-3/Cx)).